The chain runs to 435 residues: Cell adhesion molecule 2 (435 aa).

A signal peptide spans 1-24 (MIWKRSAVLRFYSVCGLLLLGSQG). Topologically, residues 25–367 (QFPLTQNVTV…SLAGQNGPDH (343 aa)) are extracellular. In terms of domain architecture, Ig-like V-type spans 27–119 (PLTQNVTVVE…PVKTSKAYLT (93 aa)). N31 and N51 each carry an N-linked (GlcNAc...) asparagine glycan. Intrachain disulfides connect C44/C104, C146/C203, and C248/C296. Ig-like C2-type domains are found at residues 127 to 219 (PQIS…VAMQ) and 227 to 312 (PSVK…YVLI). N291 carries an N-linked (GlcNAc...) asparagine glycan. Positions 341–351 (TTSPSTSASSS) are enriched in low complexity. The disordered stretch occupies residues 341–360 (TTSPSTSASSSSRRDPNSLA). The chain crosses the membrane as a helical span at residues 368–388 (ALIGGIVAVVVFVTLCSIFLL). The Cytoplasmic portion of the chain corresponds to 389-435 (GRYLARHKGTYLTNEAKGAEDAPDADTAIINAEGSQVNAEEKKEYFI). S423 is modified (phosphoserine).

The protein belongs to the nectin family. Post-translationally, glycosylation at Asn-51 reduces adhesive binding.

The protein resides in the cell membrane. The protein localises to the synapse. Its subcellular location is the cell projection. It localises to the axon. Functionally, adhesion molecule that engages in homo- and heterophilic interactions with the other nectin-like family members, leading to cell aggregation. Important for synapse organization, providing regulated trans-synaptic adhesion. Preferentially binds to oligodendrocytes. This is Cell adhesion molecule 2 (Cadm2) from Rattus norvegicus (Rat).